The sequence spans 49 residues: Astexin-2 (49 aa).

A propeptide spanning residues 1–25 (MTKRTTIAARRVGLIDLGKATRQTK) is cleaved from the precursor. Residues 26–34 (GLTQIQALD) constitute a cross-link (isoaspartyl glycine isopeptide (Gly-Asp)).

In terms of processing, this lasso peptide is hydrolyzed to a linear form by the isopeptidase AtxE2, in vitro. The isopeptidase AtxE2 only recognizes the threaded form (but not the unthreaded form).

It is found in the cytoplasm. The protein resides in the secreted. Its function is as follows. Shows weak antimicrobial activity against its phylogenetic relative Caulobacter crescentus. Does not show activity against other bacteria tested (E.coli, Vibrio sp, Burkhoderia thailandensis, and Salmonella newport). In Asticcacaulis excentricus (strain ATCC 15261 / DSM 4724 / KCTC 12464 / NCIMB 9791 / VKM B-1370 / CB 48), this protein is Astexin-2.